Consider the following 325-residue polypeptide: DNA-directed RNA polymerase subunit alpha (325 aa).

Residues 1–231 (MQTSLLKPKI…DQLSVFAALE (231 aa)) are alpha N-terminal domain (alpha-NTD). An alpha C-terminal domain (alpha-CTD) region spans residues 246 to 325 (IDPILLRPVD…ENWPPAGLDK (80 aa)).

It belongs to the RNA polymerase alpha chain family. In terms of assembly, homodimer. The RNAP catalytic core consists of 2 alpha, 1 beta, 1 beta' and 1 omega subunit. When a sigma factor is associated with the core the holoenzyme is formed, which can initiate transcription.

It catalyses the reaction RNA(n) + a ribonucleoside 5'-triphosphate = RNA(n+1) + diphosphate. In terms of biological role, DNA-dependent RNA polymerase catalyzes the transcription of DNA into RNA using the four ribonucleoside triphosphates as substrates. This Burkholderia orbicola (strain MC0-3) protein is DNA-directed RNA polymerase subunit alpha.